A 389-amino-acid polypeptide reads, in one-letter code: Dihydroorotase (389 aa).

Zn(2+) is bound by residues His-51 and His-53. Residues 53 to 55 (HVR) and Asn-85 contribute to the substrate site. 4 residues coordinate Zn(2+): Lys-133, His-158, His-192, and Asp-254. N6-carboxylysine is present on Lys-133. Asp-254 is a catalytic residue. Substrate contacts are provided by residues His-258 and 272-273 (PG).

The protein belongs to the metallo-dependent hydrolases superfamily. DHOase family. Class I DHOase subfamily. It depends on Zn(2+) as a cofactor.

It catalyses the reaction (S)-dihydroorotate + H2O = N-carbamoyl-L-aspartate + H(+). The protein operates within pyrimidine metabolism; UMP biosynthesis via de novo pathway; (S)-dihydroorotate from bicarbonate: step 3/3. Catalyzes the reversible cyclization of carbamoyl aspartate to dihydroorotate. The chain is Dihydroorotase from Sulfurisphaera tokodaii (strain DSM 16993 / JCM 10545 / NBRC 100140 / 7) (Sulfolobus tokodaii).